We begin with the raw amino-acid sequence, 222 residues long: Glutathione S-transferase A4 (222 aa).

Position 1 is an N-acetylmethionine (Met-1). The GST N-terminal domain maps to 3-83 (AKPKLYYFNG…YLAAKYNLYG (81 aa)). Glutathione-binding positions include Tyr-9, 53–55 (GQV), and 66–68 (TQT). The region spanning 85–208 (DLKERVRIDM…QPGSQRKPPP (124 aa)) is the GST C-terminal domain.

This sequence belongs to the GST superfamily. Alpha family. Homodimer. Post-translationally, the N-terminus is blocked.

The protein localises to the cytoplasm. The catalysed reaction is RX + glutathione = an S-substituted glutathione + a halide anion + H(+). Functionally, conjugation of reduced glutathione to a wide number of exogenous and endogenous hydrophobic electrophiles. In Mus musculus (Mouse), this protein is Glutathione S-transferase A4 (Gsta4).